The sequence spans 540 residues: Chaperonin GroEL (540 aa).

Residues 30–33 (TLGP), Lys-51, 87–91 (DGTTT), Gly-415, and Asp-496 each bind ATP.

Belongs to the chaperonin (HSP60) family. In terms of assembly, forms a cylinder of 14 subunits composed of two heptameric rings stacked back-to-back. Interacts with the co-chaperonin GroES.

It localises to the cytoplasm. It catalyses the reaction ATP + H2O + a folded polypeptide = ADP + phosphate + an unfolded polypeptide.. Functionally, together with its co-chaperonin GroES, plays an essential role in assisting protein folding. The GroEL-GroES system forms a nano-cage that allows encapsulation of the non-native substrate proteins and provides a physical environment optimized to promote and accelerate protein folding. The protein is Chaperonin GroEL of Thermodesulfovibrio yellowstonii (strain ATCC 51303 / DSM 11347 / YP87).